A 1266-amino-acid chain; its full sequence is Formin-like protein 13 (1266 aa).

Positions 9–193 (YRKPPDGLLE…QYVSRRNLVS (185 aa)) constitute a Phosphatase tensin-type domain. Cys-126 functions as the Phosphocysteine intermediate in the catalytic mechanism. The C2 tensin-type domain occupies 199 to 337 (DRALTMDCVI…FRVELLFSDM (139 aa)). Disordered stretches follow at residues 497–568 (KPLV…LQHS), 597–825 (KNLI…GKGR), 881–902 (SASA…PKPE), and 1210–1266 (QLEA…RTAP). Over residues 529 to 538 (PPTPSPPHPV) the composition is skewed to pro residues. Residues 617-644 (EPSSKTTNSLLLSPQASPATPTNPSKTV) are compositionally biased toward polar residues. 4 stretches are compositionally biased toward pro residues: residues 686–698 (LPRP…PPPM), 706–742 (VPPP…PPTP), 754–781 (PPAP…PPPL), and 806–815 (PNVPPTPALP). Residues 829–1226 (VNLKNSPAKK…KNAAEKEKPK (398 aa)) form the FH2 domain. Composition is skewed to basic and acidic residues over residues 889–902 (GKSR…PKPE), 1210–1248 (QLEA…EKTK), and 1255–1266 (EMSDRLKERTAP).

Belongs to the formin-like family. Class-II subfamily.

The chain is Formin-like protein 13 (FH13) from Arabidopsis thaliana (Mouse-ear cress).